The following is a 439-amino-acid chain: MSSSSGKVGFVSLGCPKNTVDSERILTQLRTEGYEISASYEDADVVLVNTCGFIDSAVQESLDAIGEALRENGKVIVTGCLGAKEDVIREVHPKVLAVSGPHAYTEVMNQVHQVAPKPEYNPFVNLVPDTGVKLTPKHYAYLKISEGCNHRCTFCIIPSFRGDLVSRPIGDVLGEAQRLVKNGVKELLVISQDTSAYGVDTKYRTGFWEGRPVKTRMKELCDELGRMGVWVRLHYVYPYPHVDDVIPLMADGKILPYLDIPFQHASPSVLKNMRRPAHAEKVLHRIGKWREQCPDITLRSTFIVGFPGETEEDFQTLLNFLEEAQLDRVGCFKYSPVEGATANELPDPVEEVVKQERWERFMEVQQRISASRLQAKIGKRMDVIVDEVVEEGAVCRSKADAPEIDGQVFLDNQTHLKPGDLVTVEIEDADEYDLWGRPV.

The MTTase N-terminal domain maps to 6–116 (GKVGFVSLGC…VMNQVHQVAP (111 aa)). Cysteine 15, cysteine 51, cysteine 80, cysteine 148, cysteine 152, and cysteine 155 together coordinate [4Fe-4S] cluster. The Radical SAM core domain occupies 134–371 (LTPKHYAYLK…MEVQQRISAS (238 aa)). The region spanning 374-439 (QAKIGKRMDV…DEYDLWGRPV (66 aa)) is the TRAM domain.

The protein belongs to the methylthiotransferase family. RimO subfamily. [4Fe-4S] cluster is required as a cofactor.

It localises to the cytoplasm. It carries out the reaction L-aspartate(89)-[ribosomal protein uS12]-hydrogen + (sulfur carrier)-SH + AH2 + 2 S-adenosyl-L-methionine = 3-methylsulfanyl-L-aspartate(89)-[ribosomal protein uS12]-hydrogen + (sulfur carrier)-H + 5'-deoxyadenosine + L-methionine + A + S-adenosyl-L-homocysteine + 2 H(+). Functionally, catalyzes the methylthiolation of an aspartic acid residue of ribosomal protein uS12. The protein is Ribosomal protein uS12 methylthiotransferase RimO of Hahella chejuensis (strain KCTC 2396).